Reading from the N-terminus, the 177-residue chain is Large ribosomal subunit protein uL6 (177 aa).

The protein belongs to the universal ribosomal protein uL6 family. Part of the 50S ribosomal subunit.

Its function is as follows. This protein binds to the 23S rRNA, and is important in its secondary structure. It is located near the subunit interface in the base of the L7/L12 stalk, and near the tRNA binding site of the peptidyltransferase center. This Variovorax paradoxus (strain S110) protein is Large ribosomal subunit protein uL6.